The primary structure comprises 210 residues: Acyl-homoserine-lactone synthase (210 aa).

This sequence belongs to the autoinducer synthase family.

The catalysed reaction is a fatty acyl-[ACP] + S-adenosyl-L-methionine = an N-acyl-L-homoserine lactone + S-methyl-5'-thioadenosine + holo-[ACP] + H(+). Its function is as follows. Required for the synthesis of OHHL (N-(3-oxohexanoyl)-L-homoserine lactone), an autoinducer molecule which binds to EsaR. OHHL is necessary for biosynthesis of EPS virulence factor (extracellular heteropolysaccharide) which plays a role in the development of Stewart's wilt on sweet corn. This Pantoea stewartii subsp. stewartii (Erwinia stewartii) protein is Acyl-homoserine-lactone synthase (esaI).